The sequence spans 285 residues: Neuralized-like protein 2 (285 aa).

The interval 1–28 is disordered; the sequence is MADPSEHVGLGGPRSPARPEPPPTRFHQ. The 222-residue stretch at 23–244 folds into the NHR domain; sequence PTRFHQVHGA…STKSVRLVQL (222 aa). An SOCS box domain is found at 250 to 285; that stretch reads SLQTLCRLVIHKRVVHRLAIDVLHLPKGLKDFCKYE.

Probable component the ECS(NEURL2) E3 ubiquitin-protein ligase complex consisting of ELOB/Elongin B, ELOC/Elongin C, CUL5, RBX1 and NEURL2. Interacts with CTNNB1. Expressed specifically in skeletal and cardiac muscles.

It localises to the cytoplasm. It participates in protein modification; protein ubiquitination. Its function is as follows. Plays an important role in the process of myofiber differentiation and maturation. Probable substrate-recognition component of a SCF-like ECS (Elongin BC-CUL2/5-SOCS-box protein) E3 ubiquitin-protein ligase complex, which mediates the ubiquitination of proteins. Probably contributes to catalysis through recognition and positioning of the substrate and the ubiquitin-conjugating enzyme. During myogenesis, controls the ubiquitination and degradation of the specific pool of CTNNB1/beta-catenin located at the sarcolemma. The protein is Neuralized-like protein 2 (Neurl2) of Mus musculus (Mouse).